The primary structure comprises 410 residues: Indoleamine 2,3-dioxygenase nanC (410 aa).

His309 is a heme binding site.

It belongs to the indoleamine 2,3-dioxygenase family. Heme serves as cofactor.

It carries out the reaction D-tryptophan + O2 = N-formyl-D-kynurenine. The catalysed reaction is L-tryptophan + O2 = N-formyl-L-kynurenine. The protein operates within secondary metabolite biosynthesis. Its function is as follows. Indoleamine 2,3-dioxygenase; part of the gene cluster that mediates the biosynthesis of the benzazepine alkaloid nanangelenin A which contains an unprecedented 3,4-dihydro-1-benzazepine-2,5-dione-N-prenyl-N-acetoxy-anthranilamide scaffold. The first step of nanangelenin biosynthesis is catalyzed by the indoleamine 2,3-dioxygenase nanC which produces N-formyl-kynurenine through the catabolism of tryptophan. The two-module NRPS nanA then utilizes anthranilate (Ant) and L-kynurenine (L-Kyn) to assemble the dipeptide product nanangelenin B. The first adenylation domain of nanA (A1) loads anthranilate onto the T1 domain, while A2 loads kynurenine, generated through spontaneous nonenzymatic deformylation of the nanC-supplied N-formyl-kynurenine. The peptide bond formation between the tethered amino acids is catalyzed by the first condensation domain (C1) between anthranilate's carbonyl carbon and kynurenine's aliphatic primary amine. The second C domain (C2) catalyzes the final cyclization event between the aromatic amine of kynurenine and the tethered carbonyl carbon, yielding nanangelenin B. The terminal T3 domain enhances the catalytic efficiency of C2, suggesting the T2-tethered Ant-L-Kyn is transferred to T3 prior to cyclization by C2. Once released from nanA, nanangelenin B is then prenylated by the prenyltransferase nanD to form nanangelenin C. Nanangelenin C is then N-hydroxylated by the FAD-dependent monooxygenase nanF and further acetylated by the acetyltransferase nanB to yield nanangelenin F. Finally, the N-methyltransferase nanE methylates the amide nitrogen of 1-benzazepine to convert nanangelenin F into nanangelenin A. NanE is also able to methylate most of the intermediates of the pathway such as nanangelenin B and nanangelenin C to produce nanangelenin D and nanangelenin E, respectively. The protein is Indoleamine 2,3-dioxygenase nanC of Aspergillus nanangensis.